The following is a 331-amino-acid chain: Glycerophosphodiester phosphodiesterase 1 (331 aa).

Over 1-3 (MWL) the chain is Cytoplasmic. A helical membrane pass occupies residues 4 to 24 (WEDQGGLLGPFSFVLVLLLVV). At 25–248 (TRSPFNACVL…PRYSVFWKQS (224 aa)) the chain is on the lumenal side. The GP-PDE domain occupies 65-331 (VSAIAHRGGS…SMLEDCAPHF (267 aa)). E97 and D99 together coordinate Mg(2+). N168 carries N-linked (GlcNAc...) asparagine glycosylation. Residue D174 coordinates Mg(2+). The helical transmembrane segment at 249 to 269 (VFVVLDILLDWSMHNVLWYLC) threads the bilayer. The Cytoplasmic portion of the chain corresponds to 270-331 (GISAFLMQKD…SMLEDCAPHF (62 aa)).

The protein belongs to the glycerophosphoryl diester phosphodiesterase family. Interacts with PRAF2. Interacts with RGS16. It depends on Mg(2+) as a cofactor. N-glycosylated. In terms of tissue distribution, detected in heart, brain, lung, liver, skeletal muscle, kidney, pituitary and testis.

It localises to the cell membrane. The protein resides in the cytoplasmic vesicle membrane. It catalyses the reaction sn-glycero-3-phospho-1D-myo-inositol + H2O = myo-inositol + sn-glycerol 3-phosphate + H(+). The catalysed reaction is 1-O-(1Z-octadecenyl)-sn-glycero-3-phospho-(N-5Z,8Z,11Z,14Z-eicosatetraenoyl)-ethanolamine + H2O = 1-O-(1Z-octadecenyl)-sn-glycero-3-phosphate + N-(5Z,8Z,11Z,14Z-eicosatetraenoyl)-ethanolamine + H(+). It carries out the reaction 1-O-(1Z-octadecenyl)-sn-glycero-3-phospho-(N-9Z-octadecenoyl)-ethanolamine + H2O = 1-O-(1Z-octadecenyl)-sn-glycero-3-phosphate + N-(9Z-octadecenoyl) ethanolamine + H(+). The enzyme catalyses 1-O-(1Z-octadecenyl)-sn-glycero-3-phospho-N-hexadecanoyl-ethanolamine + H2O = 1-O-(1Z-octadecenyl)-sn-glycero-3-phosphate + N-hexadecanoylethanolamine + H(+). It catalyses the reaction N-(4Z,7Z,10Z,13Z,16Z,19Z)-docosahexaenoyl-sn-glycero-3-phosphoethanolamine + H2O = N-(4Z,7Z,10Z,13Z,16Z,19Z)-docosahexaenoyl ethanolamine + sn-glycerol 3-phosphate + H(+). The catalysed reaction is N-eicosanoyl-sn-glycero-3-phosphoethanolamine + H2O = N-eicosanoyl ethanolamine + sn-glycerol 3-phosphate + H(+). It carries out the reaction N-hexadecanoyl-sn-glycero-3-phosphoethanolamine + H2O = N-hexadecanoylethanolamine + sn-glycerol 3-phosphate + H(+). The enzyme catalyses N-(9Z-octadecenoyl)-sn-glycero-3-phosphoethanolamine + H2O = N-(9Z-octadecenoyl) ethanolamine + sn-glycerol 3-phosphate + H(+). It catalyses the reaction N-(5Z,8Z,11Z,14Z-eicosatetraenoyl)-sn-glycero-3-phosphoethanolamine + H2O = N-(5Z,8Z,11Z,14Z-eicosatetraenoyl)-ethanolamine + sn-glycerol 3-phosphate + H(+). Its activity is regulated as follows. Inhibited by EDTA, calcium chloride, and zinc chloride. Enhanced by magnesium chloride. Glycerophosphodiester phosphodiesterase activity can be modulated by G-protein signaling pathways. Functionally, hydrolyzes the phosphodiester bond of glycerophosphodiesters such as glycerophosphoinositol (GroPIns) and glycerophosphoethanolamine (GroPEth), to yield a glycerol phosphate and an alcohol. Hydrolyzes glycerophospho-N-acylethanolamines to N-acylethanolamines in the brain and participates in bioactive N-acylethanolamine biosynthesis such as anandamide (an endocannabinoid), N-palmitoylethanolamine (an anti-inflammatory), and N-oleoylethanolamine (an anorexic). In addition, has a lysophospholipase D activity by hydrolyzing N-acyl-lysoplasmenylethanolamine (N-acyl-lysoPlsEt) to N-acylethanolamine. However lysophospholipase D activity is lower than glycerophosphodiester phosphodiesterase activity. Has little or no activity towards glycerophosphocholine. The sequence is that of Glycerophosphodiester phosphodiesterase 1 from Rattus norvegicus (Rat).